The following is a 153-amino-acid chain: Transcriptional repressor NrdR (153 aa).

The tract at residues 1–20 (MKCPFCNSADTRVKNSRHSD) is disordered. Residues 3 to 34 (CPFCNSADTRVKNSRHSDDNMSVRRRRLCEVC) fold into a zinc finger. Residues 11–20 (TRVKNSRHSD) are compositionally biased toward basic and acidic residues. Positions 49–139 (IMVLKKDGRM…VYMDFSDADD (91 aa)) constitute an ATP-cone domain.

It belongs to the NrdR family. Zn(2+) serves as cofactor.

Negatively regulates transcription of bacterial ribonucleotide reductase nrd genes and operons by binding to NrdR-boxes. In Anaplasma phagocytophilum (strain HZ), this protein is Transcriptional repressor NrdR.